The following is a 359-amino-acid chain: Phosphate acyltransferase (359 aa).

Belongs to the PlsX family. Homodimer. Probably interacts with PlsY.

The protein resides in the cytoplasm. It carries out the reaction a fatty acyl-[ACP] + phosphate = an acyl phosphate + holo-[ACP]. The protein operates within lipid metabolism; phospholipid metabolism. Its function is as follows. Catalyzes the reversible formation of acyl-phosphate (acyl-PO(4)) from acyl-[acyl-carrier-protein] (acyl-ACP). This enzyme utilizes acyl-ACP as fatty acyl donor, but not acyl-CoA. In Salmonella heidelberg (strain SL476), this protein is Phosphate acyltransferase.